An 86-amino-acid chain; its full sequence is MKIDKEQIIKAHQLHKNDVGSVQVQISILTDQIKKLTDHLLANKKDFISKRGLYTKVSKRKRLLKYLKERNIETYRDLIKNLNLRG.

Belongs to the universal ribosomal protein uS15 family. Part of the 30S ribosomal subunit. Forms a bridge to the 50S subunit in the 70S ribosome, contacting the 23S rRNA.

In terms of biological role, one of the primary rRNA binding proteins, it binds directly to 16S rRNA where it helps nucleate assembly of the platform of the 30S subunit by binding and bridging several RNA helices of the 16S rRNA. Functionally, forms an intersubunit bridge (bridge B4) with the 23S rRNA of the 50S subunit in the ribosome. This chain is Small ribosomal subunit protein uS15, found in Mycoplasma genitalium (strain ATCC 33530 / DSM 19775 / NCTC 10195 / G37) (Mycoplasmoides genitalium).